Consider the following 58-residue polypeptide: Small ribosomal subunit protein bS21 (58 aa).

A disordered region spans residues 37–58 (FYEKPSVKRKRKSEAARKRKKF). Residues 43–58 (VKRKRKSEAARKRKKF) show a composition bias toward basic residues.

The protein belongs to the bacterial ribosomal protein bS21 family.

The sequence is that of Small ribosomal subunit protein bS21 from Streptococcus sanguinis (strain SK36).